A 299-amino-acid chain; its full sequence is ATP phosphoribosyltransferase (299 aa).

It belongs to the ATP phosphoribosyltransferase family. Long subfamily. Equilibrium between an active dimeric form, an inactive hexameric form and higher aggregates. Interconversion between the various forms is largely reversible and is influenced by the natural substrates and inhibitors of the enzyme. It depends on Mg(2+) as a cofactor.

The protein resides in the cytoplasm. It carries out the reaction 1-(5-phospho-beta-D-ribosyl)-ATP + diphosphate = 5-phospho-alpha-D-ribose 1-diphosphate + ATP. It functions in the pathway amino-acid biosynthesis; L-histidine biosynthesis; L-histidine from 5-phospho-alpha-D-ribose 1-diphosphate: step 1/9. Its activity is regulated as follows. Feedback inhibited by histidine. Catalyzes the condensation of ATP and 5-phosphoribose 1-diphosphate to form N'-(5'-phosphoribosyl)-ATP (PR-ATP). Has a crucial role in the pathway because the rate of histidine biosynthesis seems to be controlled primarily by regulation of HisG enzymatic activity. In Buchnera aphidicola subsp. Schizaphis graminum (strain Sg), this protein is ATP phosphoribosyltransferase (hisG).